A 137-amino-acid polypeptide reads, in one-letter code: 5-hydroxyisourate hydrolase (137 aa).

The N-terminal stretch at 1-23 (MLKRYLVLSVVTAAFSLPSLVYA) is a signal peptide. The substrate site is built by H32, R70, and Y134.

This sequence belongs to the transthyretin family. 5-hydroxyisourate hydrolase subfamily. Homotetramer.

The protein localises to the periplasm. The catalysed reaction is 5-hydroxyisourate + H2O = 5-hydroxy-2-oxo-4-ureido-2,5-dihydro-1H-imidazole-5-carboxylate + H(+). Its function is as follows. Catalyzes the hydrolysis of 5-hydroxyisourate (HIU) to 2-oxo-4-hydroxy-4-carboxy-5-ureidoimidazoline (OHCU). The sequence is that of 5-hydroxyisourate hydrolase (hiuH) from Escherichia coli O157:H7.